A 503-amino-acid polypeptide reads, in one-letter code: AMP phosphorylase (503 aa).

Residues Gly168, 194 to 199 (SRAITS), and Thr203 contribute to the AMP site. The active-site Proton donor is Asp256. AMP-binding residues include Ser264 and Lys288.

Belongs to the thymidine/pyrimidine-nucleoside phosphorylase family. Type 2 subfamily. As to quaternary structure, forms an exceptionally large macromolecular structure (&gt;40-mers) in solution.

The enzyme catalyses AMP + phosphate = alpha-D-ribose 1,5-bisphosphate + adenine. The catalysed reaction is CMP + phosphate = cytosine + alpha-D-ribose 1,5-bisphosphate. It carries out the reaction UMP + phosphate = alpha-D-ribose 1,5-bisphosphate + uracil. With respect to regulation, AMP phosphorolysis is allosterically regulated by the substrate AMP. Catalyzes the conversion of AMP and phosphate to adenine and ribose 1,5-bisphosphate (R15P). Exhibits phosphorylase activity toward CMP, dCMP and UMP in addition to AMP. Functions in an archaeal AMP degradation pathway, together with R15P isomerase and RubisCO. This Thermococcus kodakarensis (strain ATCC BAA-918 / JCM 12380 / KOD1) (Pyrococcus kodakaraensis (strain KOD1)) protein is AMP phosphorylase.